Reading from the N-terminus, the 209-residue chain is Uracil phosphoribosyltransferase (209 aa).

5-phospho-alpha-D-ribose 1-diphosphate contacts are provided by residues arginine 79, arginine 104, and 131-139; that span reads DPMLATGGS. Residues isoleucine 194 and 199–201 contribute to the uracil site; that span reads GDA. Position 200 (aspartate 200) interacts with 5-phospho-alpha-D-ribose 1-diphosphate.

It belongs to the UPRTase family. The cofactor is Mg(2+).

It catalyses the reaction UMP + diphosphate = 5-phospho-alpha-D-ribose 1-diphosphate + uracil. Its pathway is pyrimidine metabolism; UMP biosynthesis via salvage pathway; UMP from uracil: step 1/1. Allosterically activated by GTP. In terms of biological role, catalyzes the conversion of uracil and 5-phospho-alpha-D-ribose 1-diphosphate (PRPP) to UMP and diphosphate. The polypeptide is Uracil phosphoribosyltransferase (Lacticaseibacillus paracasei (strain ATCC 334 / BCRC 17002 / CCUG 31169 / CIP 107868 / KCTC 3260 / NRRL B-441) (Lactobacillus paracasei)).